Consider the following 149-residue polypeptide: UPF0178 protein VF_0601 (149 aa).

This sequence belongs to the UPF0178 family.

In Aliivibrio fischeri (strain ATCC 700601 / ES114) (Vibrio fischeri), this protein is UPF0178 protein VF_0601.